The sequence spans 52 residues: uncharacterized protein (52 aa).

Residues 21–40 form a helical membrane-spanning segment; it reads VAMNSYVELLFLSVPLIHIF.

The protein localises to the cell membrane. This is an uncharacterized protein from Bacillus subtilis (strain 168).